Reading from the N-terminus, the 236-residue chain is MSTPHINANPGDFAKTIIMSGDPLRAKLIAETYLEDVKEVTNVRGILGFTGKYKSKDISIMGHGMGAPSASIYFHELMATYGVKNFIRVGSCGAISDNIHLKDLIVAMGASTDSKINRIRFLDHDLAAIANYDLLQACIEVLKTTTVNYKVGNVFSSDLFYRPNENDYTLMAKYGVLGVEMEVNALYALAAEHQCRALALCTVTDHIVQHEHLTADERRTDLHEMVKVALETAIKI.

His-5 is a binding site for a purine D-ribonucleoside. Phosphate-binding positions include Gly-21, Arg-25, Arg-44, and Arg-88–Ser-91. Residues Glu-180 to Glu-182 and Thr-204 to Asp-205 each bind a purine D-ribonucleoside. Residue Asp-205 is the Proton donor of the active site.

The protein belongs to the PNP/UDP phosphorylase family. Homohexamer; trimer of homodimers.

It carries out the reaction a purine D-ribonucleoside + phosphate = a purine nucleobase + alpha-D-ribose 1-phosphate. The enzyme catalyses a purine 2'-deoxy-D-ribonucleoside + phosphate = a purine nucleobase + 2-deoxy-alpha-D-ribose 1-phosphate. Its function is as follows. Catalyzes the reversible phosphorolytic breakdown of the N-glycosidic bond in the beta-(deoxy)ribonucleoside molecules, with the formation of the corresponding free purine bases and pentose-1-phosphate. The polypeptide is Purine nucleoside phosphorylase DeoD-type 1 (Shewanella oneidensis (strain ATCC 700550 / JCM 31522 / CIP 106686 / LMG 19005 / NCIMB 14063 / MR-1)).